Consider the following 335-residue polypeptide: Pyridoxal 5'-phosphate synthase subunit PdxS (335 aa).

D59 is a D-ribose 5-phosphate binding site. The active-site Schiff-base intermediate with D-ribose 5-phosphate is the K116. G188 is a binding site for D-ribose 5-phosphate. A D-glyceraldehyde 3-phosphate-binding site is contributed by K200. Residues G253 and G274–S275 each bind D-ribose 5-phosphate.

This sequence belongs to the PdxS/SNZ family. In the presence of PdxT, forms a dodecamer of heterodimers.

The catalysed reaction is aldehydo-D-ribose 5-phosphate + D-glyceraldehyde 3-phosphate + L-glutamine = pyridoxal 5'-phosphate + L-glutamate + phosphate + 3 H2O + H(+). Its pathway is cofactor biosynthesis; pyridoxal 5'-phosphate biosynthesis. Functionally, catalyzes the formation of pyridoxal 5'-phosphate from ribose 5-phosphate (RBP), glyceraldehyde 3-phosphate (G3P) and ammonia. The ammonia is provided by the PdxT subunit. Can also use ribulose 5-phosphate and dihydroxyacetone phosphate as substrates, resulting from enzyme-catalyzed isomerization of RBP and G3P, respectively. This is Pyridoxal 5'-phosphate synthase subunit PdxS from Hyperthermus butylicus (strain DSM 5456 / JCM 9403 / PLM1-5).